A 75-amino-acid chain; its full sequence is uncharacterized protein (75 aa).

The helical transmembrane segment at 49 to 69 (VDIVAVATTLPFIVAVICIVF) threads the bilayer.

The protein localises to the host membrane. This is an uncharacterized protein from Saccharolobus islandicus (Sulfolobus islandicus).